Consider the following 161-residue polypeptide: MTELKVKTEKVEKQLTRELLKPVLKTPKEKIDNSGKFYATGKRKNAIARVWLKVGKGKIVVNKKTIDQYFPSETYVKTILQPFVLTKTIDQYDVICTVRGGGISGQKGAILHGISKALDKSAPDFHAILRKGGLLTRDSRVVERKKYGQRKARKKTQFSKR.

This sequence belongs to the universal ribosomal protein uS9 family.

This chain is Small ribosomal subunit protein uS9, found in Rickettsia felis (strain ATCC VR-1525 / URRWXCal2) (Rickettsia azadi).